The following is a 404-amino-acid chain: Tryptophan synthase beta chain (404 aa).

K94 carries the N6-(pyridoxal phosphate)lysine modification.

It belongs to the TrpB family. In terms of assembly, tetramer of two alpha and two beta chains. Pyridoxal 5'-phosphate is required as a cofactor.

It catalyses the reaction (1S,2R)-1-C-(indol-3-yl)glycerol 3-phosphate + L-serine = D-glyceraldehyde 3-phosphate + L-tryptophan + H2O. The protein operates within amino-acid biosynthesis; L-tryptophan biosynthesis; L-tryptophan from chorismate: step 5/5. Its function is as follows. The beta subunit is responsible for the synthesis of L-tryptophan from indole and L-serine. In Staphylococcus aureus (strain bovine RF122 / ET3-1), this protein is Tryptophan synthase beta chain.